The primary structure comprises 227 residues: Thymidine kinase 1 (227 aa).

Residues 15 to 22 (GPMFSGKT), 47 to 49 (DTR), and 91 to 94 (DEGQ) contribute to the ATP site. Glutamate 92 functions as the Proton acceptor in the catalytic mechanism. Phenylalanine 122 lines the substrate pocket. The Zn(2+) site is built by cysteine 147 and cysteine 150. Residues 166 to 170 (IELIG) and tyrosine 175 contribute to the substrate site. The Zn(2+) site is built by cysteine 179 and cysteine 182. Positions 187–196 (QNEGNSTKPS) are enriched in polar residues. The disordered stretch occupies residues 187–227 (QNEGNSTKPSKTARHSHSQSAPSVAPLAVNINPDDHLNNDY).

The protein belongs to the thymidine kinase family. In terms of assembly, interacts with calmodulin in the presence of Ca(2+).

The catalysed reaction is thymidine + ATP = dTMP + ADP + H(+). This Dictyostelium discoideum (Social amoeba) protein is Thymidine kinase 1.